Reading from the N-terminus, the 415-residue chain is Histidine--tRNA ligase (415 aa).

The protein belongs to the class-II aminoacyl-tRNA synthetase family. In terms of assembly, homodimer.

The protein resides in the cytoplasm. The catalysed reaction is tRNA(His) + L-histidine + ATP = L-histidyl-tRNA(His) + AMP + diphosphate + H(+). The protein is Histidine--tRNA ligase of Clostridium botulinum (strain Kyoto / Type A2).